A 299-amino-acid chain; its full sequence is NAD-dependent protein deacetylase 1 (299 aa).

Residues 15–292 (LPPGTTDLAP…TTVADRLGLR (278 aa)) enclose the Deacetylase sirtuin-type domain. Residues 39–59 (GAGI…GSLS) and 117–120 (QNVD) contribute to the NAD(+) site. His135 (proton acceptor) is an active-site residue. Residues Cys143, Cys146, Cys194, and Cys197 each contribute to the Zn(2+) site. NAD(+)-binding positions include 234 to 236 (GSS) and Leu278.

It belongs to the sirtuin family. Class II subfamily. It depends on Zn(2+) as a cofactor.

It localises to the cytoplasm. The catalysed reaction is N(6)-acetyl-L-lysyl-[protein] + NAD(+) + H2O = 2''-O-acetyl-ADP-D-ribose + nicotinamide + L-lysyl-[protein]. Functionally, NAD-dependent protein deacetylase which modulates the activities of several enzymes which are inactive in their acetylated form. The protein is NAD-dependent protein deacetylase 1 of Streptomyces coelicolor (strain ATCC BAA-471 / A3(2) / M145).